Consider the following 542-residue polypeptide: Sensory neuron membrane protein 2 (542 aa).

At 1–487 (MMVMNTELRQ…MKVLTLLDIV (487 aa)) the chain is on the extracellular side. Residues N33, N128, N238, and N274 are each glycosylated (N-linked (GlcNAc...) asparagine). 3 disulfides stabilise this stretch: C283-C351, C312-C378, and C353-C367. The chain crosses the membrane as a helical span at residues 488–508 (QWVMIGSGLLLAIIMPIVYFI). The Cytoplasmic portion of the chain corresponds to 509–542 (KRRPSSGSITPTLTTTTSTVSISDGGGLGGNPQK).

This sequence belongs to the CD36 family. As to expression, detected in the antenna, legs and wings. Higher levels of expression detected in male compared to female.

It localises to the cell membrane. Functionally, plays an olfactory role that is not restricted to pheromone sensitivity. This chain is Sensory neuron membrane protein 2, found in Aedes aegypti (Yellowfever mosquito).